The primary structure comprises 1921 residues: Disks large homolog 5 (1921 aa).

The CARD domain occupies 1 to 90 (MEPQRRELLA…HLLPILYLNG (90 aa)). The disordered stretch occupies residues 116–143 (ESSSSLSSVGTTGKAPSPPPLLTEQQAN). The stretch at 139 to 601 (EQQANDTVEN…KEARFRQLMA (463 aa)) forms a coiled coil. Residues Ser264 and Ser295 each carry the phosphoserine modification. 2 consecutive PDZ domains span residues 620 to 710 (VVEF…RRRK) and 705 to 796 (VVRR…LKVF). Residues 857-898 (ELGHSGGSSSFLHKPFSGSSSPVSPQACPSTSERSLNSFRSD) are disordered. Positions 873 to 898 (SGSSSPVSPQACPSTSERSLNSFRSD) are enriched in polar residues. Position 900 is a phosphoserine (Ser900). Residues 930–1121 (EVPLDKIDPE…RPKSAPSFRP (192 aa)) form a disordered region. Position 984 is a phosphothreonine (Thr984). Ser1000 carries the post-translational modification Phosphoserine. Thr1011 bears the Phosphothreonine mark. Residues 1017–1030 (RRSDSIKFQHRLET) show a composition bias toward basic and acidic residues. A Phosphoserine modification is found at Ser1021. The span at 1045 to 1055 (TSPPSAPPPSM) shows a compositional bias: pro residues. Residue Thr1183 is modified to Phosphothreonine. Disordered stretches follow at residues 1204 to 1227 (VLPC…SVQH), 1243 to 1266 (YSEM…SSSN), and 1280 to 1343 (PRYP…KDRP). Ser1209 is subject to Phosphoserine. The span at 1217–1227 (GSQSLSPSVQH) shows a compositional bias: polar residues. Residues 1252–1266 (SNSLPSSARLGSSSN) are compositionally biased toward low complexity. Phosphoserine is present on Ser1263. Residues 1292 to 1324 (GSLSHSECSTPPRSPLNIDTLSSCSQPQTTAST) are compositionally biased toward polar residues. Position 1334 is a phosphoserine (Ser1334). The PDZ 3 domain maps to 1350–1429 (HVKVQKGSEP…TITILAQYNP (80 aa)). Polar residues-rich tracts occupy residues 1434–1443 (LNSHSRSSSH), 1450–1460 (PHSTLQGSSAG), and 1483–1495 (AKQS…SVGD). The interval 1434–1501 (LNSHSRSSSH…SVGDTTKKTP (68 aa)) is disordered. In terms of domain architecture, PDZ 4 spans 1504–1585 (RIVFIKKSQL…SLRLKVQYRH (82 aa)). Residues 1596–1664 (GDSFYIRALY…PSKYVMDQEF (69 aa)) form the SH3 domain. At Ser1669 the chain carries Phosphoserine. Positions 1724–1907 (DSVSLAYQRV…ICTQILAMVS (184 aa)) constitute a Guanylate kinase-like domain.

It belongs to the MAGUK family. In terms of assembly, interacts with MPP1. Interacts with CTNNB1 and with the third SH3 domain of SORBS3 to form a ternary complex. Interacts (via coiled-coil domain) with MARK3. Interacts (via PDZ domain 3) with STK3/MST2 and STK4/MST1. Interacts with SCRIB. Interacts with CTNB1. Interacts with SMO and (via PDZ4 or guanylate kinase-like domain) with KIF7. In terms of tissue distribution, brain (at protein level).

Its subcellular location is the cell junction. It localises to the cell membrane. It is found in the postsynaptic density. The protein localises to the cytoplasm. The protein resides in the cytoskeleton. Its subcellular location is the cilium basal body. Its function is as follows. Acts as a regulator of the Hippo signaling pathway. Negatively regulates the Hippo signaling pathway by mediating the interaction of MARK3 with STK3/4, bringing them together to promote MARK3-dependent hyperphosphorylation and inactivation of STK3 kinase activity toward LATS1. Positively regulates the Hippo signaling by mediating the interaction of SCRIB with STK4/MST1 and LATS1 which is important for the activation of the Hippo signaling pathway. Involved in regulating cell proliferation, maintenance of epithelial polarity, epithelial-mesenchymal transition (EMT), cell migration and invasion. Plays an important role in dendritic spine formation and synaptogenesis in cortical neurons; regulates synaptogenesis by enhancing the cell surface localization of N-cadherin. Acts as a positive regulator of hedgehog (Hh) signaling pathway. Plays a critical role in the early point of the SMO activity cycle by interacting with SMO at the ciliary base to induce the accumulation of KIF7 and GLI2 at the ciliary tip for GLI2 activation. The sequence is that of Disks large homolog 5 (Dlg5) from Mus musculus (Mouse).